A 257-amino-acid chain; its full sequence is MAVGKNKKMGKKGAKKKVVDPFTRKEWYDIKAPSMFNVQHIGKTLVNRTQGTKIASEGLKGRVYEVSLGDLNNAESEFRKMRLICEDVQGRTCLTNFHGMRLTRDKLCSIVKKWHTLIEANVAVKTSDGYLLRLFCIGFTKKNARQLKKTSYAKSSKIRQIRAKMVEYMQKEVQGSDLKDVCHKLVPDSIGKDIEKACSYIYPLQDVCIRKVKILKKPKFEIGRLMEMHTDVSTFTSAEGEKIERPDDYEPPVQESV.

Residues 236–257 (TSAEGEKIERPDDYEPPVQESV) form a disordered region. A compositionally biased stretch (basic and acidic residues) spans 239–248 (EGEKIERPDD).

Belongs to the eukaryotic ribosomal protein eS1 family. In terms of assembly, component of the small ribosomal subunit. Mature ribosomes consist of a small (40S) and a large (60S) subunit. The 40S subunit contains about 33 different proteins and 1 molecule of RNA (18S). The 60S subunit contains about 49 different proteins and 3 molecules of RNA (28S, 5.8S and 5S).

The protein localises to the cytoplasm. In Brugia malayi (Filarial nematode worm), this protein is Small ribosomal subunit protein eS1.